Here is a 349-residue protein sequence, read N- to C-terminus: NADH-ubiquinone oxidoreductase chain 2 (349 aa).

Transmembrane regions (helical) follow at residues 3 to 23 (PYVLTILLSSLGLGTVLTFAS), 66 to 86 (AAAMILFASTTNAWLVGEWEI), 98 to 118 (VMLALALKLGLAPVHFWLPEV), 139 to 159 (FALMIQVAPTINSSLLVTIGL), 178 to 198 (ILAYLPIAHLGWMVLILQFAP), 199 to 219 (SLTLLSLSLYIVMTSSAFLTL), 240 to 260 (LAALTALVLLSLGGLPPLSGF), 274 to 294 (GLPLSATLAAMTALLSLYFYL), and 319 to 339 (FTMITLPLSITTIMALGLLPL).

The protein belongs to the complex I subunit 2 family.

It is found in the mitochondrion inner membrane. It carries out the reaction a ubiquinone + NADH + 5 H(+)(in) = a ubiquinol + NAD(+) + 4 H(+)(out). Functionally, core subunit of the mitochondrial membrane respiratory chain NADH dehydrogenase (Complex I) that is believed to belong to the minimal assembly required for catalysis. Complex I functions in the transfer of electrons from NADH to the respiratory chain. The immediate electron acceptor for the enzyme is believed to be ubiquinone. This is NADH-ubiquinone oxidoreductase chain 2 (MT-ND2) from Oncorhynchus mykiss (Rainbow trout).